A 335-amino-acid polypeptide reads, in one-letter code: Methionine import ATP-binding protein MetN 1 (335 aa).

In terms of domain architecture, ABC transporter spans Ile-2–Val-242. An ATP-binding site is contributed by Gly-38–Ser-45.

Belongs to the ABC transporter superfamily. Methionine importer (TC 3.A.1.24) family. The complex is composed of two ATP-binding proteins (MetN), two transmembrane proteins (MetI) and a solute-binding protein (MetQ).

It is found in the cell inner membrane. The enzyme catalyses L-methionine(out) + ATP + H2O = L-methionine(in) + ADP + phosphate + H(+). It carries out the reaction D-methionine(out) + ATP + H2O = D-methionine(in) + ADP + phosphate + H(+). Its function is as follows. Part of the ABC transporter complex MetNIQ involved in methionine import. Responsible for energy coupling to the transport system. The protein is Methionine import ATP-binding protein MetN 1 of Pseudomonas fluorescens (strain Pf0-1).